The primary structure comprises 107 residues: Large ribosomal subunit protein uL24 (107 aa).

This sequence belongs to the universal ribosomal protein uL24 family. As to quaternary structure, part of the 50S ribosomal subunit.

Its function is as follows. One of two assembly initiator proteins, it binds directly to the 5'-end of the 23S rRNA, where it nucleates assembly of the 50S subunit. Functionally, one of the proteins that surrounds the polypeptide exit tunnel on the outside of the subunit. This is Large ribosomal subunit protein uL24 from Kosmotoga olearia (strain ATCC BAA-1733 / DSM 21960 / TBF 19.5.1).